The primary structure comprises 475 residues: ATP synthase subunit beta (475 aa).

152 to 159 (GGAGVGKT) is a binding site for ATP.

This sequence belongs to the ATPase alpha/beta chains family. In terms of assembly, F-type ATPases have 2 components, CF(1) - the catalytic core - and CF(0) - the membrane proton channel. CF(1) has five subunits: alpha(3), beta(3), gamma(1), delta(1), epsilon(1). CF(0) has four main subunits: a(1), b(1), b'(1) and c(9-12).

It is found in the cell inner membrane. The catalysed reaction is ATP + H2O + 4 H(+)(in) = ADP + phosphate + 5 H(+)(out). Functionally, produces ATP from ADP in the presence of a proton gradient across the membrane. The catalytic sites are hosted primarily by the beta subunits. This Cereibacter sphaeroides (strain ATCC 17025 / ATH 2.4.3) (Rhodobacter sphaeroides) protein is ATP synthase subunit beta.